We begin with the raw amino-acid sequence, 259 residues long: Protein unc-50 homolog (259 aa).

The residue at position 1 (M1) is an N-acetylmethionine. The Cytoplasmic segment spans residues 1-82 (MLPSTSLNSS…TKDQWARDDP (82 aa)). Position 6 is a phosphoserine (S6). Residues 83-103 (AFLVLLSIWLCVSTIGFGFVL) form a helical membrane-spanning segment. Over 104 to 115 (DMGFFETIKLLL) the chain is Lumenal. A helical membrane pass occupies residues 116-136 (WVVFIDCVGVGLLISTLMWFI). The Cytoplasmic segment spans residues 137 to 163 (SNKYLVKRQSRDYDVEWGYAFDVHLNA). Residues 164 to 184 (FYPLLVILHFIQLFFINHVIL) traverse the membrane as a helical segment. Residues 185-187 (TDT) lie on the Lumenal side of the membrane. A helical membrane pass occupies residues 188 to 208 (FIGYLVGNTLWLIAVGYYIYV). Residues 209-222 (TFLGYSALPFLKNT) are Cytoplasmic-facing. A helical transmembrane segment spans residues 223-243 (VVLLYPFAPLIVLYGLSLALG). At 244-259 (WNFTHTLCSFYKYRVK) the chain is on the lumenal side.

The protein belongs to the unc-50 family. Expressed in brain, kidney and testis, and at lower levels in heart.

Its subcellular location is the nucleus inner membrane. It localises to the golgi apparatus membrane. In terms of biological role, involved in the cell surface expression of neuronal nicotinic receptors. Binds RNA. This Rattus norvegicus (Rat) protein is Protein unc-50 homolog (Unc50).